Reading from the N-terminus, the 89-residue chain is Small ribosomal subunit protein uS15 (89 aa).

This sequence belongs to the universal ribosomal protein uS15 family. Part of the 30S ribosomal subunit. Forms a bridge to the 50S subunit in the 70S ribosome, contacting the 23S rRNA.

Its function is as follows. One of the primary rRNA binding proteins, it binds directly to 16S rRNA where it helps nucleate assembly of the platform of the 30S subunit by binding and bridging several RNA helices of the 16S rRNA. In terms of biological role, forms an intersubunit bridge (bridge B4) with the 23S rRNA of the 50S subunit in the ribosome. The polypeptide is Small ribosomal subunit protein uS15 (Staphylococcus saprophyticus subsp. saprophyticus (strain ATCC 15305 / DSM 20229 / NCIMB 8711 / NCTC 7292 / S-41)).